The chain runs to 198 residues: Probable molybdenum cofactor guanylyltransferase (198 aa).

GTP is bound by residues 9–11 (LAG), K22, D66, and D95. D95 contacts Mg(2+).

This sequence belongs to the MobA family. Mg(2+) serves as cofactor.

It is found in the cytoplasm. It catalyses the reaction Mo-molybdopterin + GTP + H(+) = Mo-molybdopterin guanine dinucleotide + diphosphate. Transfers a GMP moiety from GTP to Mo-molybdopterin (Mo-MPT) cofactor (Moco or molybdenum cofactor) to form Mo-molybdopterin guanine dinucleotide (Mo-MGD) cofactor. The protein is Probable molybdenum cofactor guanylyltransferase of Clostridium perfringens (strain 13 / Type A).